We begin with the raw amino-acid sequence, 397 residues long: Lymphoid enhancer-binding factor 1 (397 aa).

Residues 1-60 are CTNNB1-binding; it reads MPQLSGGGGGGDPELCATDEMIPFKDEGDPQKEKIFAEISHPEEEGDLADIKSSLVNESE. Lys25 participates in a covalent cross-link: Glycyl lysine isopeptide (Lys-Gly) (interchain with G-Cter in SUMO). Positions 38-102 are disordered; sequence EISHPEEEGD…KHPDGGLYNK (65 aa). Residues 80–96 show a composition bias toward basic and acidic residues; that stretch reads PYHDKAREHPDDGKHPD. Phosphoserine is present on Ser130. Thr153 bears the Phosphothreonine; by NLK mark. Ser164 carries the phosphoserine; by NLK modification. Disordered regions lie at residues 164 to 190 and 266 to 296; these read SPGS…PAPE and VKQE…KRPH. Lys267 is covalently cross-linked (Glycyl lysine isopeptide (Lys-Gly) (interchain with G-Cter in SUMO)). Positions 267–294 are enriched in basic and acidic residues; the sequence is KQEHPHTDSDLMHVKPEHEQRKEQEPKR. The HMG box DNA-binding region spans 297–365; sequence IKKPLNAFML…LHMQLYPGWS (69 aa). Residues 367–397 form a disordered region; it reads RDNYGKKKKRKREKLQESTSGTGPRMTAAYI.

This sequence belongs to the TCF/LEF family. Binds the armadillo repeat of CTNNB1 and forms a stable complex. Interacts with TLE1, PIASG, ALYREF/THOC4, EP300, MDFI and MDFIC. Interacts with DAZAP2. Phosphorylated at Thr-153 and/or Ser-164 by NLK. Phosphorylation by NLK at these sites represses LEF1-mediated transcriptional activation of target genes of the canonical Wnt signaling pathway.

It is found in the nucleus. Transcription factor that binds DNA in a sequence-specific manner. Participates in the Wnt signaling pathway. Activates transcription of target genes in the presence of CTNNB1 and EP300. PIASG antagonizes both Wnt-dependent and Wnt-independent activation by LEF1. TLE1, TLE2, TLE3 and TLE4 repress transactivation mediated by LEF1 and CTNNB1. Regulates T-cell receptor alpha enhancer function. Required for IL17A expressing gamma-delta T-cell maturation and development, via binding to regulator loci of BLK to modulate expression. Acts as a positive regulator of odontoblast differentiation during mesenchymal tooth germ formation, expression is repressed during the bell stage by MSX1-mediated inhibition of CTNNB1 signaling. May play a role in hair cell differentiation and follicle morphogenesis. The protein is Lymphoid enhancer-binding factor 1 of Rattus norvegicus (Rat).